The chain runs to 419 residues: Zinc finger CCCH domain-containing protein 62 (419 aa).

A C3H1-type zinc finger spans residues 89 to 116; that stretch reads SLRKWVCKYWKDGKCKRGEQCQFLHSWS. WD repeat units lie at residues 129 to 168, 210 to 247, 256 to 293, 296 to 335, and 383 to 419; these read GHNK…CVHS, GVVG…ESDP, GHSG…CIMT, QHTG…KVVQ, and FSTH…GNKV.

This chain is Zinc finger CCCH domain-containing protein 62 (ZFWD4), found in Arabidopsis thaliana (Mouse-ear cress).